The sequence spans 456 residues: Phosphomannomutase (456 aa).

The Phosphoserine intermediate role is filled by Ser98. The Mg(2+) site is built by Ser98, Asp245, Asp247, and Asp249.

The protein belongs to the phosphohexose mutase family. It depends on Mg(2+) as a cofactor.

The enzyme catalyses alpha-D-mannose 1-phosphate = D-mannose 6-phosphate. It functions in the pathway nucleotide-sugar biosynthesis; GDP-alpha-D-mannose biosynthesis; alpha-D-mannose 1-phosphate from D-fructose 6-phosphate: step 2/2. Involved in the biosynthesis of the capsular polysaccharide colanic acid. In Escherichia coli (strain K12), this protein is Phosphomannomutase (manB).